Reading from the N-terminus, the 548-residue chain is MADGVDHIDIYADVGEEFNQEAEYGAHDQIELYEDVLSPSANNGDAPEDRDYMDNLAASVGDDVVKGSVPNIVYTYTGKRIALYIGNLTWWTTDEDLTDAVHSLGVNDILEIKFFENRANGQSKGFALICVSSESSSKKLMDLLPKREMHGQKPIVTPCNKQFLSQFEMQSRKTATQAGQMSGEGKAGPPGINARLPFPPGGRGRGRFPTSGPGGDRFPGPAGPGGPPPPFSAGMTPPRPPMCPPGPPGPPGPPPPGQPLPPPLPGPPNRGERPPPPVMFPGQPYGQPSIVTLPPGPPPPGYGPPPGPPPPQQGPPPPPGAFPPRPPGPPMALGPPPHLPGPPPGGPPPAPHVNPNFFPPPGNAGMTSSDSRGPPPSDPYGRPPPYERGDYGPPGRDMDVVRTPLSEAEFEEIMNRNRAISSSAISRAVSDASAGDYGSAIETLVTAISLIKQSKVSADDRCKVLISSLQDCLHGIESKSYGSGSRRRERSRERDHSRSREKSRRHKSRSRDRHDDYYRERSRERERHRDRERDRDRERDREREYRHR.

The RRM domain occupies 81–161 (IALYIGNLTW…QKPIVTPCNK (81 aa)). Positions 169 to 180 (MQSRKTATQAGQ) are enriched in polar residues. Disordered regions lie at residues 169–401 (MQSR…MDVV) and 473–548 (LHGI…YRHR). Pro residues-rich tracts occupy residues 221-279 (PAGP…PPVM), 294-362 (PPGP…PPPG), and 373-384 (GPPPSDPYGRPP). Composition is skewed to basic and acidic residues over residues 385–400 (PYERGDYGPPGRDMDV) and 490–500 (RSRERDHSRSR). Residues 501-511 (EKSRRHKSRSR) are compositionally biased toward basic residues. Residues 512–548 (DRHDDYYRERSRERERHRDRERDRDRERDREREYRHR) show a composition bias toward basic and acidic residues.

This sequence belongs to the RRM CPSF6/7 family. Component of the cleavage factor Im (CFIm) complex.

It localises to the nucleus. The protein resides in the nucleoplasm. Its subcellular location is the nucleus speckle. It is found in the cytoplasm. Functionally, component of the cleavage factor Im (CFIm) complex that functions as an activator of the pre-mRNA 3'-end cleavage and polyadenylation processing required for the maturation of pre-mRNA into functional mRNAs. CFIm contributes to the recruitment of multiprotein complexes on specific sequences on the pre-mRNA 3'-end, so called cleavage and polyadenylation signals (pA signals). Most pre-mRNAs contain multiple pA signals, resulting in alternative cleavage and polyadenylation (APA) producing mRNAs with variable 3'-end formation. The CFIm complex acts as a key regulator of cleavage and polyadenylation site choice during APA through its binding to 5'-UGUA-3' elements localized in the 3'-untranslated region (UTR) for a huge number of pre-mRNAs. Plays a role in mRNA export. This chain is Cleavage and polyadenylation specificity factor subunit 6, found in Xenopus laevis (African clawed frog).